The primary structure comprises 44 residues: Protein PsbN (44 aa).

Residues 7 to 29 (VATVFVSCLVLSITGYSLYIGFG) traverse the membrane as a helical segment.

This sequence belongs to the PsbN family.

The protein resides in the plastid. It localises to the chloroplast thylakoid membrane. In terms of biological role, may play a role in photosystem I and II biogenesis. The polypeptide is Protein PsbN (Nephroselmis olivacea (Green alga)).